We begin with the raw amino-acid sequence, 377 residues long: Carbamoyl phosphate synthase small chain (377 aa).

A CPSase region spans residues 1–186 (MSTPALLVLA…LGKGFVTPDE (186 aa)). Residues serine 47, glycine 238, and glycine 240 each coordinate L-glutamine. Positions 190–377 (HVVAYDFGVK…IGNMKAAKRA (188 aa)) constitute a Glutamine amidotransferase type-1 domain. The active-site Nucleophile is the cysteine 266. Positions 267, 270, 308, 310, and 311 each coordinate L-glutamine. Catalysis depends on residues histidine 350 and glutamate 352.

Belongs to the CarA family. Composed of two chains; the small (or glutamine) chain promotes the hydrolysis of glutamine to ammonia, which is used by the large (or ammonia) chain to synthesize carbamoyl phosphate. Tetramer of heterodimers (alpha,beta)4.

It carries out the reaction hydrogencarbonate + L-glutamine + 2 ATP + H2O = carbamoyl phosphate + L-glutamate + 2 ADP + phosphate + 2 H(+). The enzyme catalyses L-glutamine + H2O = L-glutamate + NH4(+). The protein operates within amino-acid biosynthesis; L-arginine biosynthesis; carbamoyl phosphate from bicarbonate: step 1/1. It participates in pyrimidine metabolism; UMP biosynthesis via de novo pathway; (S)-dihydroorotate from bicarbonate: step 1/3. Small subunit of the glutamine-dependent carbamoyl phosphate synthetase (CPSase). CPSase catalyzes the formation of carbamoyl phosphate from the ammonia moiety of glutamine, carbonate, and phosphate donated by ATP, constituting the first step of 2 biosynthetic pathways, one leading to arginine and/or urea and the other to pyrimidine nucleotides. The small subunit (glutamine amidotransferase) binds and cleaves glutamine to supply the large subunit with the substrate ammonia. This chain is Carbamoyl phosphate synthase small chain, found in Neisseria meningitidis serogroup A / serotype 4A (strain DSM 15465 / Z2491).